We begin with the raw amino-acid sequence, 278 residues long: Energy-coupling factor transporter ATP-binding protein EcfA1 (278 aa).

Residues 5-240 enclose the ABC transporter domain; it reads IEVRNLKYKY…EDLEELGLDQ (236 aa). 40–47 contributes to the ATP binding site; the sequence is GHNGSGKS.

Belongs to the ABC transporter superfamily. Energy-coupling factor EcfA family. As to quaternary structure, forms a stable energy-coupling factor (ECF) transporter complex composed of 2 membrane-embedded substrate-binding proteins (S component), 2 ATP-binding proteins (A component) and 2 transmembrane proteins (T component).

The protein localises to the cell membrane. Its function is as follows. ATP-binding (A) component of a common energy-coupling factor (ECF) ABC-transporter complex. Unlike classic ABC transporters this ECF transporter provides the energy necessary to transport a number of different substrates. This is Energy-coupling factor transporter ATP-binding protein EcfA1 from Streptococcus sanguinis (strain SK36).